Consider the following 298-residue polypeptide: CCR4-NOT transcription complex subunit 9 (298 aa).

This sequence belongs to the CNOT9 family. In terms of assembly, homodimer. Component of the CCR4-NOT complex.

The protein resides in the nucleus. The protein localises to the cytoplasm. Its subcellular location is the P-body. Its function is as follows. Component of the CCR4-NOT complex which is one of the major cellular mRNA deadenylases and is linked to various cellular processes including bulk mRNA degradation, miRNA-mediated repression, translational repression during translational initiation and general transcription regulation. Additional complex functions may be a consequence of its influence on mRNA expression. Involved in down-regulation of MYB- and JUN-dependent transcription. Enhances ligand-dependent transcriptional activity of nuclear hormone receptors. May play a role in cell differentiation. The chain is CCR4-NOT transcription complex subunit 9 from Danio rerio (Zebrafish).